A 400-amino-acid polypeptide reads, in one-letter code: Elongation factor Tu 1 (400 aa).

Residues 10 to 209 enclose the tr-type G domain; sequence KPHLNIGTIG…AVDSYIPLPQ (200 aa). The tract at residues 19-26 is G1; it reads GHIDHGKT. A GTP-binding site is contributed by 19–26; the sequence is GHIDHGKT. T26 lines the Mg(2+) pocket. Residues 60–64 are G2; it reads GITIN. The G3 stretch occupies residues 81-84; sequence DCPG. Residues 81-85 and 136-139 each bind GTP; these read DCPGH and NKTD. The interval 136-139 is G4; it reads NKTD. Residues 174–176 are G5; it reads SAL.

The protein belongs to the TRAFAC class translation factor GTPase superfamily. Classic translation factor GTPase family. EF-Tu/EF-1A subfamily. As to quaternary structure, monomer.

The protein localises to the cytoplasm. The catalysed reaction is GTP + H2O = GDP + phosphate + H(+). Its function is as follows. GTP hydrolase that promotes the GTP-dependent binding of aminoacyl-tRNA to the A-site of ribosomes during protein biosynthesis. This is Elongation factor Tu 1 from Syntrophomonas wolfei subsp. wolfei (strain DSM 2245B / Goettingen).